A 1118-amino-acid polypeptide reads, in one-letter code: Carbamoyl phosphate synthase arginine-specific large chain (1118 aa).

The tract at residues 23–420 is carboxyphosphate synthetic domain; that stretch reads QLVEGVNSVL…AFQKALRQVD (398 aa). Residues Arg-150, Arg-190, Gly-196, Gly-197, Lys-227, Leu-229, Glu-234, Gly-260, Val-261, His-262, Gln-303, and Glu-317 each coordinate ATP. The ATP-grasp 1 domain maps to 154 to 346; the sequence is ASALKDINIP…LAYTAAKIGL (193 aa). 3 residues coordinate Mg(2+): Gln-303, Glu-317, and Asn-319. 3 residues coordinate Mn(2+): Gln-303, Glu-317, and Asn-319. Residues 421 to 573 form an oligomerization domain region; the sequence is PSLLGFQGST…YTTYNATKND (153 aa). A carbamoyl phosphate synthetic domain region spans residues 574 to 958; that stretch reads VEFNENGMLV…SYWTAIQSTM (385 aa). Positions 698-890 constitute an ATP-grasp 2 domain; the sequence is SSILDSIDVD…FIEIAVKAFL (193 aa). Residues Arg-734, Lys-773, Ile-775, Glu-780, Gly-805, Val-806, His-807, Ser-808, Gln-848, and Glu-861 each contribute to the ATP site. Mg(2+) is bound by residues Gln-848, Glu-861, and Asn-863. Mn(2+) contacts are provided by Gln-848, Glu-861, and Asn-863. The allosteric domain stretch occupies residues 959–1102; the sequence is NFHVPLPPSG…KILESHDVIV (144 aa). One can recognise an MGS-like domain in the interval 960–1118; that stretch reads FHVPLPPSGI…WDEFIGFKAY (159 aa).

It belongs to the CarB family. Heterodimer composed of 2 chains; the small (or glutamine) chain promotes the hydrolysis of glutamine to ammonia, which is used by the large (or ammonia) chain to synthesize carbamoyl phosphate. Mg(2+) is required as a cofactor. It depends on Mn(2+) as a cofactor.

Its subcellular location is the cytoplasm. It catalyses the reaction hydrogencarbonate + L-glutamine + 2 ATP + H2O = carbamoyl phosphate + L-glutamate + 2 ADP + phosphate + 2 H(+). The catalysed reaction is hydrogencarbonate + NH4(+) + 2 ATP = carbamoyl phosphate + 2 ADP + phosphate + 2 H(+). The protein operates within amino-acid biosynthesis; L-arginine biosynthesis; carbamoyl phosphate from bicarbonate: step 1/1. In terms of biological role, large subunit of the arginine-specific carbamoyl phosphate synthase (CPSase). CPSase catalyzes the formation of carbamoyl phosphate from the ammonia moiety of glutamine, hydrogencarbonate, and phosphate donated by ATP, constituting the first step of 2 biosynthetic pathways, one leading to arginine and/or urea and the other to pyrimidine nucleotides. The large subunit (synthetase) binds the substrates ammonia (free or transferred from glutamine from the small subunit), hydrogencarbonate and ATP and carries out an ATP-coupled ligase reaction, activating hydrogencarbonate by forming carboxy phosphate which reacts with ammonia to form carbamoyl phosphate. This Saccharomyces cerevisiae (strain ATCC 204508 / S288c) (Baker's yeast) protein is Carbamoyl phosphate synthase arginine-specific large chain (CPA2).